Consider the following 92-residue polypeptide: Sec-independent protein translocase protein TatA (92 aa).

Residues 2-22 (IPANFGGTELIILLVIILLLF) traverse the membrane as a helical segment. Positions 43-92 (KGTSGAYEELEEKKGEEEKDEGGKKEAEASGRGEEEQQARAAGEAGRKQG) are disordered. A compositionally biased stretch (basic and acidic residues) spans 53-80 (EEKKGEEEKDEGGKKEAEASGRGEEEQQ).

This sequence belongs to the TatA/E family. As to quaternary structure, the Tat system comprises two distinct complexes: a TatABC complex, containing multiple copies of TatA, TatB and TatC subunits, and a separate TatA complex, containing only TatA subunits. Substrates initially bind to the TatABC complex, which probably triggers association of the separate TatA complex to form the active translocon.

It is found in the cell membrane. In terms of biological role, part of the twin-arginine translocation (Tat) system that transports large folded proteins containing a characteristic twin-arginine motif in their signal peptide across membranes. TatA could form the protein-conducting channel of the Tat system. This is Sec-independent protein translocase protein TatA from Rubrobacter xylanophilus (strain DSM 9941 / JCM 11954 / NBRC 16129 / PRD-1).